The following is a 342-amino-acid chain: D-erythrose-4-phosphate dehydrogenase (342 aa).

An NAD(+)-binding site is contributed by 11-12 (RV). Substrate-binding positions include 153-155 (SCT), Arg199, 212-213 (TK), and Arg235. Catalysis depends on Cys154, which acts as the Nucleophile. Residue Asn317 participates in NAD(+) binding.

This sequence belongs to the glyceraldehyde-3-phosphate dehydrogenase family. Epd subfamily. In terms of assembly, homotetramer.

Its subcellular location is the cytoplasm. It catalyses the reaction D-erythrose 4-phosphate + NAD(+) + H2O = 4-phospho-D-erythronate + NADH + 2 H(+). Its pathway is cofactor biosynthesis; pyridoxine 5'-phosphate biosynthesis; pyridoxine 5'-phosphate from D-erythrose 4-phosphate: step 1/5. In terms of biological role, catalyzes the NAD-dependent conversion of D-erythrose 4-phosphate to 4-phosphoerythronate. The chain is D-erythrose-4-phosphate dehydrogenase from Pseudoalteromonas atlantica (strain T6c / ATCC BAA-1087).